Consider the following 602-residue polypeptide: Elongation factor 4 (602 aa).

Positions 7 to 189 constitute a tr-type G domain; sequence RNIRNFSIIA…AIVQRIPAPQ (183 aa). Residues 19–24 and 136–139 contribute to the GTP site; these read DHGKST and NKID.

The protein belongs to the TRAFAC class translation factor GTPase superfamily. Classic translation factor GTPase family. LepA subfamily.

The protein localises to the cell inner membrane. The catalysed reaction is GTP + H2O = GDP + phosphate + H(+). Its function is as follows. Required for accurate and efficient protein synthesis under certain stress conditions. May act as a fidelity factor of the translation reaction, by catalyzing a one-codon backward translocation of tRNAs on improperly translocated ribosomes. Back-translocation proceeds from a post-translocation (POST) complex to a pre-translocation (PRE) complex, thus giving elongation factor G a second chance to translocate the tRNAs correctly. Binds to ribosomes in a GTP-dependent manner. This is Elongation factor 4 from Xylella fastidiosa (strain 9a5c).